Reading from the N-terminus, the 339-residue chain is NmrA-like family domain-containing oxidoreductase notA (339 aa).

NADP(+) contacts are provided by residues 13–18 (GATGAQ), 39–43 (RKPDS), 60–61 (DG), 81–83 (TNS), Lys140, and 164–167 (YMGI).

It belongs to the NmrA-type oxidoreductase family.

Its function is as follows. NmrA-like family domain-containing oxidoreductase; part of the gene cluster that mediates the biosynthesis of notoamide, a fungal indole alkaloid that belongs to a family of natural products containing a characteristic bicyclo[2.2.2]diazaoctane core. The first step of notoamide biosynthesis involves coupling of L-proline and L-tryptophan by the bimodular NRPS notE, to produce cyclo-L-tryptophan-L-proline called brevianamide F. The reverse prenyltransferase notF then acts as a deoxybrevianamide E synthase and converts brevianamide F to deoxybrevianamide E via reverse prenylation at C-2 of the indole ring leading to the bicyclo[2.2.2]diazaoctane core. Deoxybrevianamide E is further hydroxylated at C-6 of the indole ring, likely catalyzed by the cytochrome P450 monooxygenase notG, to yield 6-hydroxy-deoxybrevianamide E. 6-hydroxy-deoxybrevianamide E is a specific substrate of the prenyltransferase notC for normal prenylation at C-7 to produce 6-hydroxy-7-prenyl-deoxybrevianamide, also called notoamide S. As the proposed pivotal branching point in notoamide biosynthesis, notoamide S can be diverted to notoamide E through an oxidative pyran ring closure putatively catalyzed by either notH cytochrome P450 monooxygenase or the notD FAD-linked oxidoreductase. This step would be followed by an indole 2,3-epoxidation-initiated pinacol-like rearrangement catalyzed by the notB FAD-dependent monooxygenase leading to the formation of notoamide C and notoamide D. On the other hand notoamide S is converted to notoamide T by notH (or notD), a bifunctional oxidase that also functions as the intramolecular Diels-Alderase responsible for generation of (+)-notoamide T. To generate antipodal (-)-notoaminide T, notH' (or notD') in Aspergillus versicolor is expected to catalyze a Diels-Alder reaction leading to the opposite stereochemistry. The remaining oxidoreductase notD (or notH) likely catalyzes the oxidative pyran ring formation to yield (+)-stephacidin A. The FAD-dependent monooxygenase notI is highly similar to notB and is predicted to catalyze a similar conversion from (+)-stephacidin A to (-)-notoamide B via the 2,3-epoxidation of (+)-stephacidin A followed by a pinacol-type rearrangement. Finally, it remains unclear which enzyme could be responsible for the final hydroxylation steps leading to notoamide A and sclerotiamide. In Aspergillus sp. (strain MF297-2), this protein is NmrA-like family domain-containing oxidoreductase notA.